The chain runs to 498 residues: Putative F-box/FBD/LRR-repeat protein At4g03220 (498 aa).

An F-box domain is found at 23-71 (VDRISNLPDSLNHQILLLLPLKSAAQASLLSKRWRSLFLSLPDLDFTSI). LRR repeat units follow at residues 148-172 (SQNLRALTLKSANLGFRLPPSSSAR), 175-200 (FQKLTSLSLSRVILHNQPCLSDFFTD), and 235-259 (SLQLEGLEVSGNKLQKLKVESCFYS). Residues 416–466 (YWESQAYELESFLNHLEFVEIHGFVECENEMSLAIFLLRHGKALIKMTLRS) enclose the FBD domain.

The chain is Putative F-box/FBD/LRR-repeat protein At4g03220 from Arabidopsis thaliana (Mouse-ear cress).